The sequence spans 387 residues: N-acetyldiaminopimelate deacetylase (387 aa).

The active site involves D75. The Proton acceptor role is filled by E134.

This sequence belongs to the peptidase M20A family. N-acetyldiaminopimelate deacetylase subfamily.

It carries out the reaction N-acetyl-(2S,6S)-2,6-diaminopimelate + H2O = (2S,6S)-2,6-diaminopimelate + acetate. It participates in amino-acid biosynthesis; L-lysine biosynthesis via DAP pathway; LL-2,6-diaminopimelate from (S)-tetrahydrodipicolinate (acetylase route): step 3/3. In terms of biological role, catalyzes the conversion of N-acetyl-diaminopimelate to diaminopimelate and acetate. This chain is N-acetyldiaminopimelate deacetylase, found in Leuconostoc citreum (strain KM20).